The chain runs to 426 residues: D-cysteine desulfhydrase 1, mitochondrial (426 aa).

The N-terminal 63 residues, 1-63 (MARGAHQAPG…IGSFLSKRPY (63 aa)), are a transit peptide targeting the mitochondrion. Position 119 is an N6-(pyridoxal phosphate)lysine (Lys-119). Ser-146 (nucleophile) is an active-site residue.

Belongs to the ACC deaminase/D-cysteine desulfhydrase family. In terms of assembly, homodimer. Requires pyridoxal 5'-phosphate as cofactor. Present in seeds (at protein level).

The protein localises to the mitochondrion. The catalysed reaction is D-cysteine + H2O = hydrogen sulfide + pyruvate + NH4(+) + H(+). Inhibited by L-cysteine (L-cys). In terms of biological role, catalyzes the production of hydrogen sulfide (H2S) from D-cysteine (D-cys). The protein is D-cysteine desulfhydrase 1, mitochondrial of Oryza sativa subsp. japonica (Rice).